We begin with the raw amino-acid sequence, 469 residues long: Glutamate--tRNA ligase 1 (469 aa).

The 'HIGH' region signature appears at Pro-11–Gly-21. The 'KMSKS' region signature appears at Lys-238–Arg-242. Residue Lys-241 coordinates ATP.

This sequence belongs to the class-I aminoacyl-tRNA synthetase family. Glutamate--tRNA ligase type 1 subfamily. In terms of assembly, monomer.

It is found in the cytoplasm. The catalysed reaction is tRNA(Glu) + L-glutamate + ATP = L-glutamyl-tRNA(Glu) + AMP + diphosphate. Catalyzes the attachment of glutamate to tRNA(Glu) in a two-step reaction: glutamate is first activated by ATP to form Glu-AMP and then transferred to the acceptor end of tRNA(Glu). This chain is Glutamate--tRNA ligase 1, found in Ehrlichia canis (strain Jake).